The chain runs to 316 residues: Glucan endo-1,3-beta-glucosidase GV (316 aa).

Residue glutamate 99 is the Proton donor of the active site. The active-site Nucleophile is the glutamate 239.

Belongs to the glycosyl hydrolase 17 family.

The protein localises to the cytoplasm. The catalysed reaction is Hydrolysis of (1-&gt;3)-beta-D-glucosidic linkages in (1-&gt;3)-beta-D-glucans.. In terms of biological role, may provide a degree of protection against microbial invasion of germinated barley grain through its ability to degrade fungal cell wall polysaccharides. The chain is Glucan endo-1,3-beta-glucosidase GV from Hordeum vulgare (Barley).